We begin with the raw amino-acid sequence, 461 residues long: Divalent metal cation transporter MntH (461 aa).

Helical transmembrane passes span 56–76 (AMAF…PGNW), 89–109 (TLLA…SLCA), 132–152 (AMVL…AEVI), 160–180 (LIFG…VFLI), 193–213 (ALVI…LALA), 230–250 (IVTN…TVMP), 285–305 (IALM…AATF), 322–342 (LLAP…ALLC), 378–398 (AIAI…GTGQ), 399–419 (LLIL…FPLV), and 433–453 (SPLW…ALNV).

Belongs to the NRAMP family.

Its subcellular location is the cell inner membrane. Functionally, h(+)-stimulated, divalent metal cation uptake system. This is Divalent metal cation transporter MntH from Agrobacterium fabrum (strain C58 / ATCC 33970) (Agrobacterium tumefaciens (strain C58)).